A 420-amino-acid polypeptide reads, in one-letter code: Glucose-1-phosphate adenylyltransferase (420 aa).

Alpha-D-glucose 1-phosphate is bound by residues Tyr108, Gly173, 188–189 (EK), and Ser206.

The protein belongs to the bacterial/plant glucose-1-phosphate adenylyltransferase family. Homotetramer.

The enzyme catalyses alpha-D-glucose 1-phosphate + ATP + H(+) = ADP-alpha-D-glucose + diphosphate. The protein operates within glycan biosynthesis; glycogen biosynthesis. Its function is as follows. Involved in the biosynthesis of ADP-glucose, a building block required for the elongation reactions to produce glycogen. Catalyzes the reaction between ATP and alpha-D-glucose 1-phosphate (G1P) to produce pyrophosphate and ADP-Glc. This Paraburkholderia phytofirmans (strain DSM 17436 / LMG 22146 / PsJN) (Burkholderia phytofirmans) protein is Glucose-1-phosphate adenylyltransferase.